A 332-amino-acid chain; its full sequence is Melanocortin receptor 4 (332 aa).

The Extracellular segment spans residues 1-43; it reads MNSTLQHGMHTSLHFWNRSTYGQHSNATESLGKGYPDGGCYEQ. Residues Asn2, Asn17, and Asn26 are each glycosylated (N-linked (GlcNAc...) asparagine). Cystine bridges form between Cys40–Cys279 and Cys271–Cys277. A helical membrane pass occupies residues 44–69; that stretch reads LFVSPEVFVTLGVISLLENILVIVAI. Over 70-81 the chain is Cytoplasmic; the sequence is AKNKNLHSPMYF. A helical transmembrane segment spans residues 82–106; the sequence is FICSLAVADMLVSVSNGSETIVITL. The Ca(2+) site is built by Glu100, Asp122, and Asp126. Residues 107 to 123 lie on the Extracellular side of the membrane; it reads LNSTDTDAQSFTVNIDN. The chain crosses the membrane as a helical span at residues 124–145; that stretch reads VIDSVICSSLLASICSLLSIAV. Topologically, residues 146–165 are cytoplasmic; that stretch reads DRYFTIFYALQYHNIMTVRR. The helical transmembrane segment at 166–186 threads the bilayer; sequence VGIIISCIWAACTVSGILFII. At 187 to 191 the chain is on the extracellular side; that stretch reads YSDST. The helical transmembrane segment at 192–215 threads the bilayer; that stretch reads AVIICLITMFFTMLALMASLYVHM. Over 216 to 248 the chain is Cytoplasmic; the sequence is FLMARLHIKRIAVLPGTGTIRQGANMKGAITLT. Residues 249–271 form a helical membrane-spanning segment; it reads ILIGVFVVCWAPFFLHLIFYISC. Residues 272–280 are Extracellular-facing; it reads PQNPYCVCF. The helical transmembrane segment at 281–304 threads the bilayer; sequence MSHFNLYLILIMCNSIIDPLIYAL. At 305 to 332 the chain is on the cytoplasmic side; it reads RSQELRKTFKEIICCYPLGGLCDLSSRY. Cys318 is lipidated: S-palmitoyl cysteine.

The protein belongs to the G-protein coupled receptor 1 family. In terms of assembly, homodimer; disulfide-linked, also forms higher order oligomers. Interacts with GNAS. Interacts with ATRNL1. Interacts with MGRN1; this interaction competes with GNAS-binding and thus inhibits agonist-induced cAMP production. Interacts with MRAP and MRAP2; these associated factors increase ligand-sensitivity and generation of cAMP.

The protein localises to the cell membrane. Functionally, hormone receptor that acts as a key component of the leptin-melanocortin pathway at the intersection of homeostatic maintenance of energetic state. Plays a role in regulating food intake: activation by a stimulating hormone such as anorexigenic alpha-melanocyte stimulating hormone (alpha-MSH) inhibits appetite, whereas binding to a natural antagonist like Agouti-related protein/AGRP promotes appetite. G-protein-coupled receptor that activates conventional Galphas signaling leading to induction of anorexogenic signaling in the hypothalamus to result in negative energy balance. Regulates the firing activity of neurons from the hypothalamus by alpha-MSH and AGRP independently of Galphas signaling by ligand-induced coupling of closure of inwardly rectifying potassium channel KCNJ13. In intestinal epithelial cells, plays a role in the inhibition of hepatic glucose production via nesfatin-1/NUCB2 leading to increased cyclic adenosine monophosphate (cAMP) levels and glucagon-like peptide 1 (GLP-1) secretion in the intestinal epithelium. The chain is Melanocortin receptor 4 (MC4R) from Vulpes vulpes (Red fox).